Here is a 293-residue protein sequence, read N- to C-terminus: Pyridoxal 5'-phosphate synthase subunit PdxS (293 aa).

Aspartate 23 lines the D-ribose 5-phosphate pocket. Catalysis depends on lysine 80, which acts as the Schiff-base intermediate with D-ribose 5-phosphate. Glycine 152 contributes to the D-ribose 5-phosphate binding site. Residue arginine 164 participates in D-glyceraldehyde 3-phosphate binding. Residues glycine 213 and 234–235 each bind D-ribose 5-phosphate; that span reads GS.

It belongs to the PdxS/SNZ family. In the presence of PdxT, forms a dodecamer of heterodimers.

It carries out the reaction aldehydo-D-ribose 5-phosphate + D-glyceraldehyde 3-phosphate + L-glutamine = pyridoxal 5'-phosphate + L-glutamate + phosphate + 3 H2O + H(+). It participates in cofactor biosynthesis; pyridoxal 5'-phosphate biosynthesis. Functionally, catalyzes the formation of pyridoxal 5'-phosphate from ribose 5-phosphate (RBP), glyceraldehyde 3-phosphate (G3P) and ammonia. The ammonia is provided by the PdxT subunit. Can also use ribulose 5-phosphate and dihydroxyacetone phosphate as substrates, resulting from enzyme-catalyzed isomerization of RBP and G3P, respectively. This chain is Pyridoxal 5'-phosphate synthase subunit PdxS, found in Roseiflexus sp. (strain RS-1).